A 20-amino-acid chain; its full sequence is T cell receptor alpha joining 3 (20 aa).

In terms of assembly, alpha-beta TR is a heterodimer composed of an alpha and beta chain; disulfide-linked. The alpha-beta TR is associated with the transmembrane signaling CD3 coreceptor proteins to form the TR-CD3 (TcR or TCR). The assembly of alpha-beta TR heterodimers with CD3 occurs in the endoplasmic reticulum where a single alpha-beta TR heterodimer associates with one CD3D-CD3E heterodimer, one CD3G-CD3E heterodimer and one CD247 homodimer forming a stable octameric structure. CD3D-CD3E and CD3G-CD3E heterodimers preferentially associate with TR alpha and TR beta chains, respectively. The association of the CD247 homodimer is the last step of TcR assembly in the endoplasmic reticulum and is required for transport to the cell surface.

Its subcellular location is the cell membrane. Functionally, j region of the variable domain of T cell receptor (TR) alpha chain that participates in the antigen recognition. Alpha-beta T cell receptors are antigen specific receptors which are essential to the immune response and are present on the cell surface of T lymphocytes. Recognize peptide-major histocompatibility (MH) (pMH) complexes that are displayed by antigen presenting cells (APC), a prerequisite for efficient T cell adaptive immunity against pathogens. Binding of alpha-beta TR to pMH complex initiates TR-CD3 clustering on the cell surface and intracellular activation of LCK that phosphorylates the ITAM motifs of CD3G, CD3D, CD3E and CD247 enabling the recruitment of ZAP70. In turn ZAP70 phosphorylates LAT, which recruits numerous signaling molecules to form the LAT signalosome. The LAT signalosome propagates signal branching to three major signaling pathways, the calcium, the mitogen-activated protein kinase (MAPK) kinase and the nuclear factor NF-kappa-B (NF-kB) pathways, leading to the mobilization of transcription factors that are critical for gene expression and essential for T cell growth and differentiation. The T cell repertoire is generated in the thymus, by V-(D)-J rearrangement. This repertoire is then shaped by intrathymic selection events to generate a peripheral T cell pool of self-MH restricted, non-autoaggressive T cells. Post-thymic interaction of alpha-beta TR with the pMH complexes shapes TR structural and functional avidity. In Homo sapiens (Human), this protein is T cell receptor alpha joining 3.